Here is a 394-residue protein sequence, read N- to C-terminus: Phosphopentomutase (394 aa).

Positions 14, 287, 292, 328, 329, and 340 each coordinate Mn(2+).

The protein belongs to the phosphopentomutase family. Mn(2+) serves as cofactor.

It localises to the cytoplasm. The enzyme catalyses 2-deoxy-alpha-D-ribose 1-phosphate = 2-deoxy-D-ribose 5-phosphate. The catalysed reaction is alpha-D-ribose 1-phosphate = D-ribose 5-phosphate. It functions in the pathway carbohydrate degradation; 2-deoxy-D-ribose 1-phosphate degradation; D-glyceraldehyde 3-phosphate and acetaldehyde from 2-deoxy-alpha-D-ribose 1-phosphate: step 1/2. Its function is as follows. Isomerase that catalyzes the conversion of deoxy-ribose 1-phosphate (dRib-1-P) and ribose 1-phosphate (Rib-1-P) to deoxy-ribose 5-phosphate (dRib-5-P) and ribose 5-phosphate (Rib-5-P), respectively. The protein is Phosphopentomutase of Shouchella clausii (strain KSM-K16) (Alkalihalobacillus clausii).